The primary structure comprises 406 residues: Trk system potassium uptake protein trkA homolog 1 (406 aa).

An RCK N-terminal 1 domain is found at 1–124; sequence MKAVIIGAGE…RAQVGVDLMI (124 aa). NAD(+) is bound by residues 7–11, D29, 70–71, and R101; these read GAGEV and TG. The region spanning 144-225 is the RCK C-terminal domain; the sequence is IDAEMFAEGK…MEDLESVFGS (82 aa). In terms of domain architecture, RCK N-terminal 2 spans 230–348; sequence RTRILLIGCG…FEMVGIDMAV (119 aa). 232-262 lines the NAD(+) pocket; it reads RILLIGCGIVGMYLAKLIDKEENADLRIIEH.

Functionally, part of a potassium transport system. In Methanosarcina mazei (Methanosarcina frisia), this protein is Trk system potassium uptake protein trkA homolog 1 (trkA1).